The chain runs to 1188 residues: MLNGAGLDKALKMSLPRRSRIRSSVGPVRSSLGYKKAEDEMSRATSVGDQLEAPARTIYLNQPHLNKFRDNQISTAKYSVLTFLPRFLYEQIRRAANAFFLFIALLQQIPDVSPTGRYTTLVPLIIILTIAGIKEIVEDFKRHKADNAVNKKKTIVLRNGMWHTIMWKEVAVGDIVKVVNGQYLPADVVLLSSSEPQAMCYVETANLDGETNLKIRQGLSHTADMQTREVLMKLSGTIECEGPNRHLYDFTGNLNLDGKSLVALGPDQILLRGTQLRNTQWVFGIVVYTGHDTKLMQNSTKAPLKRSNVEKVTNVQILVLFGILLVMALVSSAGALYWNRSHGEKNWYIKKMDTTSDNFGYNLLTFIILYNNLIPISLLVTLEVVKYTQALFINWDTDMYYIGNDTPAMARTSNLNEELGQVKYLFSDKTGTLTCNIMNFKKCSIAGVTYGHFPELAREPSSDDFCRMPPPCSDSCDFDDPRLLKNIEDRHPTAPCIQEFLTLLAVCHTVVPEKDGDNIIYQASSPDEAALVKGAKKLGFVFTARTPFSVIIEAMGQEQTFGILNVLEFSSDRKRMSVIVRTPSGRLRLYCKGADNVIFERLSKDSKYMEETLCHLEYFATEGLRTLCVAYADLSENEYEEWLKVYQEASTILKDRAQRLEECYEIIEKNLLLLGATAIEDRLQAGVPETIATLLKAEIKIWVLTGDKQETAINIGYSCRLVSQNMALILLKEDSLDATRAAITQHCTDLGNLLGKENDVALIIDGHTLKYALSFEVRRSFLDLALSCKAVICCRVSPLQKSEIVDVVKKRVKAITLAIGDGANDVGMIQTAHVGVGISGNEGMQATNNSDYAIAQFSYLEKLLLVHGAWSYNRVTKCILYCFYKNVVLYIIELWFAFVNGFSGQILFERWCIGLYNVIFTALPPFTLGIFERSCTQESMLRFPQLYKITQNGEGFNTKVFWGHCINALVHSLILFWFPMKALEHDTVLTSGHATDYLFVGNIVYTYVVVTVCLKAGLETTAWTKFSHLAVWGSMLTWLVFFGIYSTIWPTIPIAPDMRGQATMVLSSAHFWLGLFLVPTACLIEDVAWRAAKHTCKKTLLEEVQELETKSRVLGKAVLRDSNGKRLNERDRLIKRLGRKTPPTLFRGSSLQQGVPHGYAFSQEEHGAVSQEEVIRAYDTTKKKSRKK.

The Cytoplasmic portion of the chain corresponds to 1–94; that stretch reads MLNGAGLDKA…PRFLYEQIRR (94 aa). The residue at position 45 (Thr45) is a Phosphothreonine. The chain crosses the membrane as a helical span at residues 95-115; sequence AANAFFLFIALLQQIPDVSPT. Residues 116-119 lie on the Extracellular side of the membrane; the sequence is GRYT. The helical transmembrane segment at 120–140 threads the bilayer; that stretch reads TLVPLIIILTIAGIKEIVEDF. Topologically, residues 141 to 316 are cytoplasmic; that stretch reads KRHKADNAVN…SNVEKVTNVQ (176 aa). The chain crosses the membrane as a helical span at residues 317 to 337; it reads ILVLFGILLVMALVSSAGALY. Topologically, residues 338-364 are extracellular; it reads WNRSHGEKNWYIKKMDTTSDNFGYNLL. A helical membrane pass occupies residues 365 to 385; sequence TFIILYNNLIPISLLVTLEVV. Over 386–887 the chain is Cytoplasmic; the sequence is KYTQALFINW…CILYCFYKNV (502 aa). Asp428 (4-aspartylphosphate intermediate) is an active-site residue. ATP contacts are provided by Asp428, Lys429, Thr430, Glu528, Phe569, Lys592, Arg625, Thr705, Gly706, Asp707, Arg795, and Lys801. Residue Asp428 coordinates Mg(2+). Thr430 is a binding site for Mg(2+). Residue Asp821 coordinates Mg(2+). 2 residues coordinate ATP: Asn824 and Asp825. Position 825 (Asp825) interacts with Mg(2+). Residues 888–908 traverse the membrane as a helical segment; sequence VLYIIELWFAFVNGFSGQILF. The Extracellular segment spans residues 909-910; that stretch reads ER. Residues 911–931 form a helical membrane-spanning segment; that stretch reads WCIGLYNVIFTALPPFTLGIF. At 932–959 the chain is on the cytoplasmic side; the sequence is ERSCTQESMLRFPQLYKITQNGEGFNTK. The chain crosses the membrane as a helical span at residues 960-980; that stretch reads VFWGHCINALVHSLILFWFPM. Over 981–997 the chain is Extracellular; the sequence is KALEHDTVLTSGHATDY. A helical transmembrane segment spans residues 998-1018; sequence LFVGNIVYTYVVVTVCLKAGL. The Cytoplasmic segment spans residues 1019–1028; it reads ETTAWTKFSH. The chain crosses the membrane as a helical span at residues 1029–1049; that stretch reads LAVWGSMLTWLVFFGIYSTIW. The Extracellular portion of the chain corresponds to 1050–1063; sequence PTIPIAPDMRGQAT. A helical transmembrane segment spans residues 1064 to 1084; sequence MVLSSAHFWLGLFLVPTACLI. The Cytoplasmic segment spans residues 1085 to 1188; the sequence is EDVAWRAAKH…DTTKKKSRKK (104 aa). The disordered stretch occupies residues 1162–1188; the sequence is SQEEHGAVSQEEVIRAYDTTKKKSRKK. Positions 1163–1182 are enriched in basic and acidic residues; it reads QEEHGAVSQEEVIRAYDTTK.

It belongs to the cation transport ATPase (P-type) (TC 3.A.3) family. Type IV subfamily. In terms of assembly, component of a P4-ATPase flippase complex which consists of a catalytic alpha subunit and an accessory beta subunit. Interacts with TMEM30A to form a flippase complex. Mg(2+) is required as a cofactor. Strongly expressed in the brain, cerebellum, retina and testis.

The protein resides in the membrane. The protein localises to the golgi apparatus membrane. It is found in the endosome membrane. It localises to the cell membrane. Its subcellular location is the photoreceptor outer segment membrane. The protein resides in the photoreceptor inner segment membrane. The catalysed reaction is ATP + H2O + phospholipidSide 1 = ADP + phosphate + phospholipidSide 2.. It carries out the reaction a 1,2-diacyl-sn-glycero-3-phospho-L-serine(out) + ATP + H2O = a 1,2-diacyl-sn-glycero-3-phospho-L-serine(in) + ADP + phosphate + H(+). It catalyses the reaction a 1,2-diacyl-sn-glycero-3-phosphoethanolamine(in) + ATP + H2O = a 1,2-diacyl-sn-glycero-3-phosphoethanolamine(out) + ADP + phosphate + H(+). In terms of biological role, catalytic component of a P4-ATPase flippase complex which catalyzes the hydrolysis of ATP coupled to the transport of aminophospholipids from the outer to the inner leaflet of various membranes and ensures the maintenance of asymmetric distribution of phospholipids. Able to translocate phosphatidylserine, but not phosphatidylcholine. Phospholipid translocation also seems to be implicated in vesicle formation and in uptake of lipid signaling molecules. Reconstituted to liposomes, the ATP8A2:TMEM30A flippase complex predominantly transports phosphatidylserine (PS) and to a lesser extent phosphatidylethanolamine (PE). Phospholipid translocation is not associated with a countertransport of an inorganic ion or other charged substrate from the cytoplasmic side toward the exoplasm in connection with the phosphorylation from ATP. ATP8A2:TMEM30A may be involved in regulation of neurite outgrowth. Proposed to function in the generation and maintenance of phospholipid asymmetry in photoreceptor disk membranes and neuronal axon membranes. May be involved in vesicle trafficking in neuronal cells. Required for normal visual and auditory function; involved in photoreceptor and inner ear spiral ganglion cell survival. The chain is Phospholipid-transporting ATPase IB from Homo sapiens (Human).